Here is a 788-residue protein sequence, read N- to C-terminus: Protein translocase subunit SecA 2 (788 aa).

Residues glutamine 86, 104-108 (GEGKT), and aspartate 493 contribute to the ATP site.

It belongs to the SecA family. Monomer and homodimer. Part of the essential Sec protein translocation apparatus which comprises SecA, SecYEG and auxiliary proteins SecDF. Other proteins may also be involved.

The protein resides in the cell membrane. Its subcellular location is the cytoplasm. The catalysed reaction is ATP + H2O + cellular proteinSide 1 = ADP + phosphate + cellular proteinSide 2.. Functionally, part of the Sec protein translocase complex. Interacts with the SecYEG preprotein conducting channel. Has a central role in coupling the hydrolysis of ATP to the transfer of proteins into and across the cell membrane, serving as an ATP-driven molecular motor driving the stepwise translocation of polypeptide chains across the membrane. This is Protein translocase subunit SecA 2 from Bacillus anthracis.